The following is a 279-amino-acid chain: Prephenate dehydratase (279 aa).

The region spanning 2-178 (KIAYLGPRGS…NSTRFWLLGK (177 aa)) is the Prephenate dehydratase domain. An ACT domain is found at 194 to 270 (LALTLPDNLP…LGVKVRLLGN (77 aa)).

It carries out the reaction prephenate + H(+) = 3-phenylpyruvate + CO2 + H2O. It functions in the pathway amino-acid biosynthesis; L-phenylalanine biosynthesis; phenylpyruvate from prephenate: step 1/1. The protein is Prephenate dehydratase (pheA) of Lactococcus lactis subsp. lactis (strain IL1403) (Streptococcus lactis).